A 270-amino-acid polypeptide reads, in one-letter code: tRNA pseudouridine synthase A (270 aa).

Catalysis depends on D60, which acts as the Nucleophile. The tract at residues 107–111 (FHARF) is RNA binding. Substrate is bound at residue Y118. The segment at 168–172 (QCQSR) is interaction with tRNA.

Belongs to the tRNA pseudouridine synthase TruA family. Homodimer.

It carries out the reaction uridine(38/39/40) in tRNA = pseudouridine(38/39/40) in tRNA. Its function is as follows. Formation of pseudouridine at positions 38, 39 and 40 in the anticodon stem and loop of transfer RNAs. The chain is tRNA pseudouridine synthase A from Escherichia coli O139:H28 (strain E24377A / ETEC).